The primary structure comprises 463 residues: Argininosuccinate lyase (463 aa).

It belongs to the lyase 1 family. Argininosuccinate lyase subfamily.

The protein resides in the cytoplasm. It carries out the reaction 2-(N(omega)-L-arginino)succinate = fumarate + L-arginine. The protein operates within amino-acid biosynthesis; L-arginine biosynthesis; L-arginine from L-ornithine and carbamoyl phosphate: step 3/3. This chain is Argininosuccinate lyase, found in Methylorubrum populi (strain ATCC BAA-705 / NCIMB 13946 / BJ001) (Methylobacterium populi).